Here is a 172-residue protein sequence, read N- to C-terminus: Crossover junction endodeoxyribonuclease RuvC (172 aa).

Active-site residues include aspartate 12, glutamate 71, and aspartate 143. Mg(2+) contacts are provided by aspartate 12, glutamate 71, and aspartate 143.

This sequence belongs to the RuvC family. Homodimer which binds Holliday junction (HJ) DNA. The HJ becomes 2-fold symmetrical on binding to RuvC with unstacked arms; it has a different conformation from HJ DNA in complex with RuvA. In the full resolvosome a probable DNA-RuvA(4)-RuvB(12)-RuvC(2) complex forms which resolves the HJ. The cofactor is Mg(2+).

It is found in the cytoplasm. It carries out the reaction Endonucleolytic cleavage at a junction such as a reciprocal single-stranded crossover between two homologous DNA duplexes (Holliday junction).. Its function is as follows. The RuvA-RuvB-RuvC complex processes Holliday junction (HJ) DNA during genetic recombination and DNA repair. Endonuclease that resolves HJ intermediates. Cleaves cruciform DNA by making single-stranded nicks across the HJ at symmetrical positions within the homologous arms, yielding a 5'-phosphate and a 3'-hydroxyl group; requires a central core of homology in the junction. The consensus cleavage sequence is 5'-(A/T)TT(C/G)-3'. Cleavage occurs on the 3'-side of the TT dinucleotide at the point of strand exchange. HJ branch migration catalyzed by RuvA-RuvB allows RuvC to scan DNA until it finds its consensus sequence, where it cleaves and resolves the cruciform DNA. In Coxiella burnetii (strain CbuG_Q212) (Coxiella burnetii (strain Q212)), this protein is Crossover junction endodeoxyribonuclease RuvC.